The chain runs to 344 residues: Biotin synthase (344 aa).

Residues 40–267 form the Radical SAM core domain; the sequence is AQVQVSTLLS…KSMVRLSAGR (228 aa). [4Fe-4S] cluster is bound by residues cysteine 55, cysteine 59, and cysteine 62. 4 residues coordinate [2Fe-2S] cluster: cysteine 99, cysteine 130, cysteine 190, and arginine 262.

The protein belongs to the radical SAM superfamily. Biotin synthase family. As to quaternary structure, homodimer. [4Fe-4S] cluster is required as a cofactor. Requires [2Fe-2S] cluster as cofactor.

It carries out the reaction (4R,5S)-dethiobiotin + (sulfur carrier)-SH + 2 reduced [2Fe-2S]-[ferredoxin] + 2 S-adenosyl-L-methionine = (sulfur carrier)-H + biotin + 2 5'-deoxyadenosine + 2 L-methionine + 2 oxidized [2Fe-2S]-[ferredoxin]. The protein operates within cofactor biosynthesis; biotin biosynthesis; biotin from 7,8-diaminononanoate: step 2/2. Functionally, catalyzes the conversion of dethiobiotin (DTB) to biotin by the insertion of a sulfur atom into dethiobiotin via a radical-based mechanism. In Xanthomonas euvesicatoria pv. vesicatoria (strain 85-10) (Xanthomonas campestris pv. vesicatoria), this protein is Biotin synthase.